Here is a 760-residue protein sequence, read N- to C-terminus: Ferric/cupric reductase transmembrane component 1 (760 aa).

The signal sequence occupies residues 1 to 18; that stretch reads MKIQQLIVFLFAVVLIDA. At 19–212 the chain is on the extracellular side; the sequence is RTPKRYSELD…NNNFNLSINY (194 aa). N-linked (GlcNAc...) asparagine glycosylation is found at Asn-78, Asn-91, Asn-111, Asn-143, Asn-155, and Asn-207. Positions 119–177 are disordered; the sequence is TTKSSSGSKTSASASKSSKSTGSSNASKSSTNAHGSNSSTSSTSSSSSKSGKGNSGTST. A helical membrane pass occupies residues 213–233; that stretch reads GSGLLGYWAGILAIAIFANMI. The Cytoplasmic segment spans residues 234–288; that stretch reads KKMFPSLTNYLSGSISNLFRKHLFLPATFRKKKAQEFSIGVYGFFDGLIPTRLET. The chain crosses the membrane as a helical span at residues 289-309; it reads IIVVIFVVLTGLFSALHIHHV. Residues 310 to 324 are Extracellular-facing; the sequence is KDNPQYATKNAELGH. Residues 325-345 traverse the membrane as a helical segment; the sequence is LIADRTGILGTFLIPLLILFG. The region spanning 330-445 is the Ferric oxidoreductase domain; sequence TGILGTFLIP…HIVLVVFFVV (116 aa). Residues 346–371 lie on the Cytoplasmic side of the membrane; the sequence is GRNNFLQWLTGWDFATFIMYHRWISR. Heme-binding residues include His-366 and His-380. A helical membrane pass occupies residues 372-392; sequence VDVLLIIVHAITFSVSDKATG. The Extracellular segment spans residues 393–403; sequence KYNTRMKRDFM. The chain crosses the membrane as a helical span at residues 404 to 424; it reads IWGTVSTICGGFILFQAMLFF. Residues 425–430 are Cytoplasmic-facing; sequence RRKCYE. A helical transmembrane segment spans residues 431 to 451; the sequence is VFFLIHIVLVVFFVVGGYYHL. 2 residues coordinate heme: His-436 and His-450. At 452–760 the chain is on the extracellular side; the sequence is ESQGYGDFMW…EYHEQLQTWA (309 aa). In terms of domain architecture, FAD-binding FR-type spans 465–583; sequence AVWAFDRVVR…EGPYGEPSSA (119 aa). 575 to 578 provides a ligand contact to NADP(+); sequence GPYG. Asn-615 carries N-linked (GlcNAc...) asparagine glycosylation. 726-727 contacts NADP(+); that stretch reads CG. Asn-744 carries N-linked (GlcNAc...) asparagine glycosylation.

This sequence belongs to the ferric reductase (FRE) family. Requires FAD as cofactor. The cofactor is heme.

It is found in the cell membrane. It catalyses the reaction 2 a Fe(II)-siderophore + NADP(+) + H(+) = 2 a Fe(III)-siderophore + NADPH. Its function is as follows. Ferric reductase responsible for reducing extracellular iron and copper prior to import. Catalyzes the reductive uptake of Fe(3+)-salts and Fe(3+) bound to catecholate or hydroxamate siderophores. Fe(3+) is reduced to Fe(2+), which then dissociates from the siderophore and can be imported by the high-affinity Fe(2+) transport complex in the plasma membrane. Also participates in Cu(2+) reduction and Cu(+) uptake. Involved in maintenance of cell wall integrity (CWI), mitochondrial function, and interaction between the pathogen and the host. This is Ferric/cupric reductase transmembrane component 1 from Candida albicans (strain SC5314 / ATCC MYA-2876) (Yeast).